The following is a 123-amino-acid chain: Small ribosomal subunit protein uS12 (123 aa).

The interval 9-32 is disordered; it reads ANPREVQKSRKKVPALQQSPQKRG. Position 89 is a 3-methylthioaspartic acid (D89).

This sequence belongs to the universal ribosomal protein uS12 family. Part of the 30S ribosomal subunit. Contacts proteins S8 and S17. May interact with IF1 in the 30S initiation complex.

Its function is as follows. With S4 and S5 plays an important role in translational accuracy. Interacts with and stabilizes bases of the 16S rRNA that are involved in tRNA selection in the A site and with the mRNA backbone. Located at the interface of the 30S and 50S subunits, it traverses the body of the 30S subunit contacting proteins on the other side and probably holding the rRNA structure together. The combined cluster of proteins S8, S12 and S17 appears to hold together the shoulder and platform of the 30S subunit. This chain is Small ribosomal subunit protein uS12, found in Bradyrhizobium sp. (strain BTAi1 / ATCC BAA-1182).